The following is a 785-amino-acid chain: Leucyl aminopeptidase (785 aa).

Residues Glu-106 and 238 to 242 (GAMEN) each bind substrate. His-273 serves as a coordination point for Zn(2+). Glu-274 (proton acceptor) is an active-site residue. Zn(2+) is bound by residues His-277 and Glu-296.

Belongs to the peptidase M1 family. In terms of assembly, co-immunoprecipitates with the 60 kDa chaperonin. Zn(2+) is required as a cofactor. Post-translationally, can be phosphorylated by cell extracts.

Its subcellular location is the cytoplasm. It catalyses the reaction Release of an N-terminal amino acid, Xaa-|-Yaa-, in which Xaa is preferably Leu, but may be other amino acids including Pro although not Arg or Lys, and Yaa may be Pro. Amino acid amides and methyl esters are also readily hydrolyzed, but rates on arylamides are exceedingly low.. Functionally, preferentially acts as a leucyl-aminopeptidase, although it also has activity against other substrates. In Saccharolobus solfataricus (strain ATCC 35092 / DSM 1617 / JCM 11322 / P2) (Sulfolobus solfataricus), this protein is Leucyl aminopeptidase (ape2).